A 136-amino-acid polypeptide reads, in one-letter code: Glutamyl-tRNA(Gln) amidotransferase subunit C, mitochondrial (136 aa).

The N-terminal 27 residues, 1-27 (MWARAVHLGLRAAARGRRGFTSKADPQ), are a transit peptide targeting the mitochondrion.

The protein belongs to the GatC family. As to quaternary structure, subunit of the heterotrimeric GatCAB amidotransferase (AdT) complex, composed of A (QRSL1), B (GATB) and C (GATC) subunits.

It localises to the mitochondrion. The catalysed reaction is L-glutamyl-tRNA(Gln) + L-glutamine + ATP + H2O = L-glutaminyl-tRNA(Gln) + L-glutamate + ADP + phosphate + H(+). Allows the formation of correctly charged Gln-tRNA(Gln) through the transamidation of misacylated Glu-tRNA(Gln) in the mitochondria. The reaction takes place in the presence of glutamine and ATP through an activated gamma-phospho-Glu-tRNA(Gln). This is Glutamyl-tRNA(Gln) amidotransferase subunit C, mitochondrial from Bos taurus (Bovine).